The following is a 212-amino-acid chain: Small ribosomal subunit protein eS1 (212 aa).

The protein belongs to the eukaryotic ribosomal protein eS1 family.

This is Small ribosomal subunit protein eS1 from Haloquadratum walsbyi (strain DSM 16790 / HBSQ001).